Reading from the N-terminus, the 218-residue chain is TPA-induced transmembrane protein homolog (218 aa).

The disordered stretch occupies residues 1 to 54; that stretch reads MEEGSRSQSPREELELSMLDGPQEELTPLNNDLRIQPNSAEDPSPAQVGKESPW. The chain crosses the membrane as a helical span at residues 66–86; that stretch reads KLWMVIVTIFLCFIIVIVISL.

It localises to the endoplasmic reticulum membrane. In Mus musculus (Mouse), this protein is TPA-induced transmembrane protein homolog.